The sequence spans 530 residues: T-box transcription factor TBX21 (530 aa).

Residues 1–55 (MGIVEPGCGDMLTGTEPMPSDEGRGPGADQQHRFFYPEPGAQDPTDRRAGSSLGT) form a disordered region. Serine 52 carries the post-translational modification Phosphoserine. Threonine 55 is subject to Phosphothreonine. 2 positions are modified to phosphotyrosine: tyrosine 76 and tyrosine 117. A DNA-binding region (T-box) is located at residues 140-325 (LSNHLLWSKF…NNPFAKGFRE (186 aa)). Phosphotyrosine; by ABL1 is present on tyrosine 219. Serine 224 carries the post-translational modification Phosphoserine. Tyrosine 265 carries the phosphotyrosine; by ABL1 modification. Phosphothreonine is present on threonine 302. The residue at position 304 (tyrosine 304) is a Phosphotyrosine; by ABL1. A Glycyl lysine isopeptide (Lys-Gly) (interchain with G-Cter in ubiquitin) cross-link involves residue lysine 313. The tract at residues 444-530 (AGWFRPMRTL…EGQFYNYFPN (87 aa)) is disordered. Over residues 462–482 (SEEQGSSPSLWPEVTSLQPEP) the composition is skewed to polar residues. The span at 498–515 (SPYPSSGDSSSPAGAPSP) shows a compositional bias: low complexity. Serine 508 carries the phosphoserine modification. Position 525 is a phosphotyrosine; by ITK (tyrosine 525).

Interacts with RUNX1 and RUNX3. Interacts with ITK. The phosphorylated form (at Tyr-525) interacts with GATA3. Interacts with ABL1. Interacts with RELA. The phosphorylated form (at Thr-302) interacts with NFATC2. Interacts with KDM6B. Interacts with SMARCA4 in a KDM6B-dependent manner. Interacts with CCTN1 and CDK9. Interacts with USP10. In terms of processing, phosphorylations at Ser-52, Tyr-76, Ser-224 and Ser-508 are regulated by mTORC1. Phosphorylation at Tyr-525 is essential for its interaction GATA3. Phosphorylation at Tyr-219, Tyr-265 and Tyr-304 enhances its transcriptional activator activity. Phosphorylation at Thr-302 is required for its interaction with NFATC2. Ubiquitinated at Lys-313, leading to its degradation by the proteasome. Ubiquitination is essential for controlling protein stability, binding to the T-box-binding element of the IFN-gamma promoter, and for interaction with NFATC2 through induction of phosphorylation at Thr-302. Deubiquitinated by USP10 leading to its stabilization. As to expression, T-cell specific. Expressed in regulatory T (TReg) cells.

Its subcellular location is the nucleus. In terms of biological role, lineage-defining transcription factor which initiates Th1 lineage development from naive Th precursor cells both by activating Th1 genetic programs and by repressing the opposing Th2 and Th17 genetic programs. Activates transcription of a set of genes important for Th1 cell function, including those encoding IFN-gamma and the chemokine receptor CXCR3. Activates IFNG and CXCR3 genes in part by recruiting chromatin remodeling complexes including KDM6B, a SMARCA4-containing SWI/SNF-complex, and an H3K4me2-methyltransferase complex to their promoters and all of these complexes serve to establish a more permissive chromatin state conducive with transcriptional activation. Can activate Th1 genes also via recruitment of Mediator complex and P-TEFb (composed of CDK9 and CCNT1/cyclin-T1) in the form of the super elongation complex (SEC) to super-enhancers and associated genes in activated Th1 cells. Inhibits the Th17 cell lineage commitment by blocking RUNX1-mediated transactivation of Th17 cell-specific transcriptinal regulator RORC. Inhibits the Th2 cell lineage commitment by suppressing the production of Th2 cytokines, such as IL-4, IL-5, and IL- 13, via repression of transcriptional regulators GATA3 and NFATC2. Protects Th1 cells from amplifying aberrant type-I IFN response in an IFN-gamma abundant microenvironment by acting as a repressor of type-I IFN transcription factors and type-I IFN- stimulated genes. Acts as a regulator of antiviral B-cell responses; controls chronic viral infection by promoting the antiviral antibody IgG2a isotype switching and via regulation of a broad antiviral gene expression program. The protein is T-box transcription factor TBX21 (Tbx21) of Mus musculus (Mouse).